Reading from the N-terminus, the 496-residue chain is Probable cytosol aminopeptidase (496 aa).

Residues Lys-268 and Asp-273 each contribute to the Mn(2+) site. Residue Lys-280 is part of the active site. Mn(2+)-binding residues include Asp-291, Asp-350, and Glu-352. The active site involves Arg-354.

Belongs to the peptidase M17 family. Mn(2+) is required as a cofactor.

It is found in the cytoplasm. The enzyme catalyses Release of an N-terminal amino acid, Xaa-|-Yaa-, in which Xaa is preferably Leu, but may be other amino acids including Pro although not Arg or Lys, and Yaa may be Pro. Amino acid amides and methyl esters are also readily hydrolyzed, but rates on arylamides are exceedingly low.. The catalysed reaction is Release of an N-terminal amino acid, preferentially leucine, but not glutamic or aspartic acids.. Its function is as follows. Presumably involved in the processing and regular turnover of intracellular proteins. Catalyzes the removal of unsubstituted N-terminal amino acids from various peptides. The protein is Probable cytosol aminopeptidase of Thioalkalivibrio sulfidiphilus (strain HL-EbGR7).